A 72-amino-acid chain; its full sequence is Translation initiation factor IF-1 (72 aa).

In terms of domain architecture, S1-like spans 1-72; sequence MTKEDCIEMQ…SKGRIIFRSR (72 aa).

The protein belongs to the IF-1 family. In terms of assembly, component of the 30S ribosomal translation pre-initiation complex which assembles on the 30S ribosome in the order IF-2 and IF-3, IF-1 and N-formylmethionyl-tRNA(fMet); mRNA recruitment can occur at any time during PIC assembly.

Its subcellular location is the cytoplasm. One of the essential components for the initiation of protein synthesis. Stabilizes the binding of IF-2 and IF-3 on the 30S subunit to which N-formylmethionyl-tRNA(fMet) subsequently binds. Helps modulate mRNA selection, yielding the 30S pre-initiation complex (PIC). Upon addition of the 50S ribosomal subunit IF-1, IF-2 and IF-3 are released leaving the mature 70S translation initiation complex. The chain is Translation initiation factor IF-1 from Buchnera aphidicola subsp. Baizongia pistaciae (strain Bp).